The chain runs to 241 residues: Endothelial protein C receptor (241 aa).

Positions 1-20 (MLTKFLSLLLLLLLLGCAFC) are cleaved as a signal peptide. Residues 21–213 (NSDGSQSLHM…GSQTGRSYTS (193 aa)) lie on the Extracellular side of the membrane. N-linked (GlcNAc...) asparagine glycans are attached at residues N47, N64, N139, N165, and N175. A helical transmembrane segment spans residues 214-234 (LVLGILMGCFIIAGVAVGIFL). Residues 235-241 (CTGGRRC) lie on the Cytoplasmic side of the membrane.

The protein localises to the membrane. Functionally, binds activated protein C. Enhances protein C activation by the thrombin-thrombomodulin complex; plays a role in the protein C pathway controlling blood coagulation. In Rattus norvegicus (Rat), this protein is Endothelial protein C receptor (Procr).